The following is a 292-amino-acid chain: GTP cyclohydrolase FolE2 (292 aa).

The protein belongs to the GTP cyclohydrolase IV family.

It carries out the reaction GTP + H2O = 7,8-dihydroneopterin 3'-triphosphate + formate + H(+). It participates in cofactor biosynthesis; 7,8-dihydroneopterin triphosphate biosynthesis; 7,8-dihydroneopterin triphosphate from GTP: step 1/1. Its function is as follows. Converts GTP to 7,8-dihydroneopterin triphosphate. In Staphylococcus aureus (strain Newman), this protein is GTP cyclohydrolase FolE2.